A 148-amino-acid polypeptide reads, in one-letter code: Arginine repressor (148 aa).

Belongs to the ArgR family.

It localises to the cytoplasm. The protein operates within amino-acid biosynthesis; L-arginine biosynthesis [regulation]. Regulates arginine biosynthesis genes. The protein is Arginine repressor of Chlorobium phaeovibrioides (strain DSM 265 / 1930) (Prosthecochloris vibrioformis (strain DSM 265)).